We begin with the raw amino-acid sequence, 241 residues long: Uridylate kinase (241 aa).

Residue Lys15–Gly18 participates in ATP binding. Residues Gly23–Gly28 are involved in allosteric activation by GTP. Residue Gly57 coordinates UMP. Gly58 and Arg62 together coordinate ATP. Residues Asp77 and Thr138–Thr145 each bind UMP. 3 residues coordinate ATP: Thr165, Tyr171, and Asp174.

Belongs to the UMP kinase family. In terms of assembly, homohexamer.

The protein localises to the cytoplasm. It catalyses the reaction UMP + ATP = UDP + ADP. It participates in pyrimidine metabolism; CTP biosynthesis via de novo pathway; UDP from UMP (UMPK route): step 1/1. With respect to regulation, allosterically activated by GTP. Inhibited by UTP. Catalyzes the reversible phosphorylation of UMP to UDP. The protein is Uridylate kinase of Pectobacterium atrosepticum (strain SCRI 1043 / ATCC BAA-672) (Erwinia carotovora subsp. atroseptica).